The sequence spans 463 residues: Methionine aminopeptidase 2-1 (463 aa).

Residues 1–12 (MGSKTPDGHRQG) are compositionally biased toward basic and acidic residues. The segment at 1–96 (MGSKTPDGHR…SGQQTTPPRV (96 aa)) is disordered. Over residues 41–53 (SGEDDEDGDDDEE) the composition is skewed to acidic residues. The segment covering 58-67 (DLNSRAQPNN) has biased composition (polar residues). A compositionally biased stretch (basic residues) spans 70–85 (KKRKRKNNKKKKKKRP). Position 215 (histidine 215) interacts with substrate. Positions 236, 247, and 316 each coordinate a divalent metal cation. Residue histidine 324 participates in substrate binding. Residues glutamate 349 and glutamate 444 each coordinate a divalent metal cation.

Belongs to the peptidase M24A family. Methionine aminopeptidase eukaryotic type 2 subfamily. It depends on Co(2+) as a cofactor. Zn(2+) serves as cofactor. Requires Mn(2+) as cofactor. The cofactor is Fe(2+).

The protein resides in the cytoplasm. The enzyme catalyses Release of N-terminal amino acids, preferentially methionine, from peptides and arylamides.. Cotranslationally removes the N-terminal methionine from nascent proteins. The N-terminal methionine is often cleaved when the second residue in the primary sequence is small and uncharged (Met-Ala-, Cys, Gly, Pro, Ser, Thr, or Val). In Arthroderma otae (strain ATCC MYA-4605 / CBS 113480) (Microsporum canis), this protein is Methionine aminopeptidase 2-1.